We begin with the raw amino-acid sequence, 435 residues long: Adenylosuccinate synthetase (435 aa).

Residues 11–17 (GDEGKGK) and 39–41 (GHT) each bind GTP. Asp-12 functions as the Proton acceptor in the catalytic mechanism. Positions 12 and 39 each coordinate Mg(2+). Residues 12-15 (DEGK), 37-40 (NAGH), Thr-128, Arg-142, Gln-223, Thr-238, and Arg-302 contribute to the IMP site. His-40 acts as the Proton donor in catalysis. 298 to 304 (SVTGRPR) is a substrate binding site. Residues Arg-304, 330–332 (KLD), and 412–414 (STG) contribute to the GTP site.

The protein belongs to the adenylosuccinate synthetase family. As to quaternary structure, homodimer. Mg(2+) is required as a cofactor.

The protein resides in the cytoplasm. It catalyses the reaction IMP + L-aspartate + GTP = N(6)-(1,2-dicarboxyethyl)-AMP + GDP + phosphate + 2 H(+). It participates in purine metabolism; AMP biosynthesis via de novo pathway; AMP from IMP: step 1/2. Plays an important role in the de novo pathway of purine nucleotide biosynthesis. Catalyzes the first committed step in the biosynthesis of AMP from IMP. The chain is Adenylosuccinate synthetase from Coxiella burnetii (strain RSA 331 / Henzerling II).